The chain runs to 124 residues: Small ribosomal subunit protein uS12 (124 aa).

The segment at 1–22 (MATVNQLVRKPRKRKVAKSDVP) is disordered. D89 is subject to 3-methylthioaspartic acid. The tract at residues 99-124 (RGSLDTSGVQNRKQGRSKYGTKRPKK) is disordered. Over residues 111–124 (KQGRSKYGTKRPKK) the composition is skewed to basic residues.

The protein belongs to the universal ribosomal protein uS12 family. As to quaternary structure, part of the 30S ribosomal subunit. Contacts proteins S8 and S17. May interact with IF1 in the 30S initiation complex.

In terms of biological role, with S4 and S5 plays an important role in translational accuracy. Its function is as follows. Interacts with and stabilizes bases of the 16S rRNA that are involved in tRNA selection in the A site and with the mRNA backbone. Located at the interface of the 30S and 50S subunits, it traverses the body of the 30S subunit contacting proteins on the other side and probably holding the rRNA structure together. The combined cluster of proteins S8, S12 and S17 appears to hold together the shoulder and platform of the 30S subunit. This Marinomonas sp. (strain MWYL1) protein is Small ribosomal subunit protein uS12.